The chain runs to 398 residues: Tryptophan synthase beta chain (398 aa).

Position 89 is an N6-(pyridoxal phosphate)lysine (Lys89).

This sequence belongs to the TrpB family. Tetramer of two alpha and two beta chains. The cofactor is pyridoxal 5'-phosphate.

The enzyme catalyses (1S,2R)-1-C-(indol-3-yl)glycerol 3-phosphate + L-serine = D-glyceraldehyde 3-phosphate + L-tryptophan + H2O. Its pathway is amino-acid biosynthesis; L-tryptophan biosynthesis; L-tryptophan from chorismate: step 5/5. In terms of biological role, the beta subunit is responsible for the synthesis of L-tryptophan from indole and L-serine. The protein is Tryptophan synthase beta chain of Methanopyrus kandleri (strain AV19 / DSM 6324 / JCM 9639 / NBRC 100938).